A 127-amino-acid polypeptide reads, in one-letter code: Small ribosomal subunit protein uS11 (127 aa).

Belongs to the universal ribosomal protein uS11 family. Part of the 30S ribosomal subunit. Interacts with proteins S7 and S18. Binds to IF-3.

Its function is as follows. Located on the platform of the 30S subunit, it bridges several disparate RNA helices of the 16S rRNA. Forms part of the Shine-Dalgarno cleft in the 70S ribosome. This Streptococcus mutans serotype c (strain ATCC 700610 / UA159) protein is Small ribosomal subunit protein uS11.